A 388-amino-acid chain; its full sequence is Succinate--CoA ligase [ADP-forming] subunit beta (388 aa).

The ATP-grasp domain occupies 9–244 (KELFRTYGIP…TDEEDPLEVE (236 aa)). Residues K46, 53–55 (GRG), E99, V102, and E107 contribute to the ATP site. Mg(2+)-binding residues include N199 and D213. Substrate contacts are provided by residues N264 and 321-323 (GIL).

The protein belongs to the succinate/malate CoA ligase beta subunit family. In terms of assembly, heterotetramer of two alpha and two beta subunits. The cofactor is Mg(2+).

It carries out the reaction succinate + ATP + CoA = succinyl-CoA + ADP + phosphate. It catalyses the reaction GTP + succinate + CoA = succinyl-CoA + GDP + phosphate. It participates in carbohydrate metabolism; tricarboxylic acid cycle; succinate from succinyl-CoA (ligase route): step 1/1. Functionally, succinyl-CoA synthetase functions in the citric acid cycle (TCA), coupling the hydrolysis of succinyl-CoA to the synthesis of either ATP or GTP and thus represents the only step of substrate-level phosphorylation in the TCA. The beta subunit provides nucleotide specificity of the enzyme and binds the substrate succinate, while the binding sites for coenzyme A and phosphate are found in the alpha subunit. This chain is Succinate--CoA ligase [ADP-forming] subunit beta, found in Desulfosudis oleivorans (strain DSM 6200 / JCM 39069 / Hxd3) (Desulfococcus oleovorans).